The sequence spans 690 residues: Elongation factor G (690 aa).

The tr-type G domain maps to 8 to 283 (SKCRNIGIMA…AVVDYLPSPN (276 aa)). GTP contacts are provided by residues 17–24 (AHIDAGKT), 81–85 (DTPGH), and 135–138 (NKMD).

The protein belongs to the TRAFAC class translation factor GTPase superfamily. Classic translation factor GTPase family. EF-G/EF-2 subfamily.

Its subcellular location is the cytoplasm. Its function is as follows. Catalyzes the GTP-dependent ribosomal translocation step during translation elongation. During this step, the ribosome changes from the pre-translocational (PRE) to the post-translocational (POST) state as the newly formed A-site-bound peptidyl-tRNA and P-site-bound deacylated tRNA move to the P and E sites, respectively. Catalyzes the coordinated movement of the two tRNA molecules, the mRNA and conformational changes in the ribosome. The polypeptide is Elongation factor G (Anaplasma phagocytophilum (strain HZ)).